We begin with the raw amino-acid sequence, 96 residues long: Large ribosomal subunit protein bL28 (96 aa).

Polar residues predominate over residues 1 to 22; sequence MSRSCELTGKGVQSGNNVSHAN. The tract at residues 1 to 24 is disordered; it reads MSRSCELTGKGVQSGNNVSHANNK.

The protein belongs to the bacterial ribosomal protein bL28 family.

The protein is Large ribosomal subunit protein bL28 of Rhizobium meliloti (strain 1021) (Ensifer meliloti).